Consider the following 176-residue polypeptide: Small ribosomal subunit protein uS5 (176 aa).

The 64-residue stretch at 15 to 78 (FEERIVEIRR…SAARRNVFEV (64 aa)) folds into the S5 DRBM domain.

It belongs to the universal ribosomal protein uS5 family. As to quaternary structure, part of the 30S ribosomal subunit. Contacts proteins S4 and S8.

Its function is as follows. With S4 and S12 plays an important role in translational accuracy. Located at the back of the 30S subunit body where it stabilizes the conformation of the head with respect to the body. This Thermosipho africanus (strain TCF52B) protein is Small ribosomal subunit protein uS5.